We begin with the raw amino-acid sequence, 444 residues long: UDP-N-acetylmuramate--L-alanine ligase (444 aa).

Residue 110–116 (GAHGKTS) participates in ATP binding.

The protein belongs to the MurCDEF family.

It localises to the cytoplasm. It carries out the reaction UDP-N-acetyl-alpha-D-muramate + L-alanine + ATP = UDP-N-acetyl-alpha-D-muramoyl-L-alanine + ADP + phosphate + H(+). It functions in the pathway cell wall biogenesis; peptidoglycan biosynthesis. Cell wall formation. The protein is UDP-N-acetylmuramate--L-alanine ligase of Streptococcus pneumoniae (strain Hungary19A-6).